The chain runs to 95 residues: Aspartyl/glutamyl-tRNA(Asn/Gln) amidotransferase subunit C (95 aa).

The protein belongs to the GatC family. As to quaternary structure, heterotrimer of A, B and C subunits.

It catalyses the reaction L-glutamyl-tRNA(Gln) + L-glutamine + ATP + H2O = L-glutaminyl-tRNA(Gln) + L-glutamate + ADP + phosphate + H(+). It carries out the reaction L-aspartyl-tRNA(Asn) + L-glutamine + ATP + H2O = L-asparaginyl-tRNA(Asn) + L-glutamate + ADP + phosphate + 2 H(+). In terms of biological role, allows the formation of correctly charged Asn-tRNA(Asn) or Gln-tRNA(Gln) through the transamidation of misacylated Asp-tRNA(Asn) or Glu-tRNA(Gln) in organisms which lack either or both of asparaginyl-tRNA or glutaminyl-tRNA synthetases. The reaction takes place in the presence of glutamine and ATP through an activated phospho-Asp-tRNA(Asn) or phospho-Glu-tRNA(Gln). This Rhizobium johnstonii (strain DSM 114642 / LMG 32736 / 3841) (Rhizobium leguminosarum bv. viciae) protein is Aspartyl/glutamyl-tRNA(Asn/Gln) amidotransferase subunit C.